A 155-amino-acid chain; its full sequence is Ribosomal RNA large subunit methyltransferase H (155 aa).

S-adenosyl-L-methionine contacts are provided by residues L73, G104, and 123-128 (LSPLTL).

It belongs to the RNA methyltransferase RlmH family. In terms of assembly, homodimer.

Its subcellular location is the cytoplasm. The enzyme catalyses pseudouridine(1915) in 23S rRNA + S-adenosyl-L-methionine = N(3)-methylpseudouridine(1915) in 23S rRNA + S-adenosyl-L-homocysteine + H(+). Functionally, specifically methylates the pseudouridine at position 1915 (m3Psi1915) in 23S rRNA. The chain is Ribosomal RNA large subunit methyltransferase H from Pseudomonas syringae pv. tomato (strain ATCC BAA-871 / DC3000).